Consider the following 247-residue polypeptide: Uroporphyrinogen-III C-methyltransferase (247 aa).

Residues Pro12, 117–118 (TA), Met168, Ala197, and Ala225 contribute to the S-adenosyl-L-homocysteine site.

Belongs to the precorrin methyltransferase family.

The catalysed reaction is uroporphyrinogen III + 2 S-adenosyl-L-methionine = precorrin-2 + 2 S-adenosyl-L-homocysteine + H(+). Its pathway is cofactor biosynthesis; adenosylcobalamin biosynthesis; precorrin-2 from uroporphyrinogen III: step 1/1. It functions in the pathway porphyrin-containing compound metabolism; siroheme biosynthesis; precorrin-2 from uroporphyrinogen III: step 1/1. Functionally, catalyzes the two successive C-2 and C-7 methylation reactions involved in the conversion of uroporphyrinogen III to precorrin-2 via the intermediate formation of precorrin-1. It is a step in the biosynthesis of both cobalamin (vitamin B12) and siroheme. In Pseudomonas fluorescens, this protein is Uroporphyrinogen-III C-methyltransferase.